Here is a 124-residue protein sequence, read N- to C-terminus: Large ribosomal subunit protein bL20 (124 aa).

This sequence belongs to the bacterial ribosomal protein bL20 family.

In terms of biological role, binds directly to 23S ribosomal RNA and is necessary for the in vitro assembly process of the 50S ribosomal subunit. It is not involved in the protein synthesizing functions of that subunit. This chain is Large ribosomal subunit protein bL20, found in Ehrlichia chaffeensis (strain ATCC CRL-10679 / Arkansas).